The sequence spans 565 residues: Deformed epidermal autoregulatory factor 1 homolog (565 aa).

Disordered stretches follow at residues 29 to 62 (AAAAAESEAEEPVLSRDEDSEEDADSEAERETRR) and 162 to 189 (GLKGPAAPLTPGPQSPPTPLAPGQEKGG). The span at 169-181 (PLTPGPQSPPTPL) shows a compositional bias: pro residues. Thr171 is modified (phosphothreonine). Ser176 is subject to Phosphoserine. At Thr179 the chain carries Phosphothreonine. The SAND domain occupies 193–273 (NWDPSVYDSE…QCLIQDGILN (81 aa)). The Nuclear localization signal signature appears at 301–316 (KRRKKENELPTTPVKK). Positions 403–478 (IAPFPEAALP…QLKTLFEQAK (76 aa)) are interaction with LMO4. Thr432 carries the phosphothreonine modification. A phosphoserine mark is found at Ser443 and Ser448. Zn(2+)-binding residues include Cys504, Cys507, Cys515, Cys518, Cys524, Cys528, His536, and Cys540. The MYND-type zinc finger occupies 504-540 (CVNCGREAMSECTGCHKVNYCSTFCQRKDWKDHQHVC).

In terms of assembly, homodimer. Interacts with LMO4; LMO4 blocks export from nucleus. Interacts with LMO2 and CLIM2. May interact with the corepressors NCOR1 and NCRO2. Identified in a complex with XRCC5 and XRCC6. Interacts (via the SAND domain) with the DNA-PK complex subunit XRCC6; the interaction is direct and may be inhibited by DNA-binding. In terms of processing, may be phosphorylated by DNA-PK complex in a DNA independent manner (in vitro). Ubiquitous. Detected in brain, spleen, adrenal, lung, skeletal muscle, liver, kidney, and in developing germ cells in testis. In pituitary, restricted to hormone-secreting cell types.

Its subcellular location is the nucleus. It localises to the secreted. Its function is as follows. Transcription factor that binds to sequence with multiple copies of 5'-TTC[CG]G-3' present in its own promoter and that of the HNRPA2B1 gene. Down-regulates transcription of these genes. Binds to the retinoic acid response element (RARE) 5'-AGGGTTCACCGAAAGTTCA-3'. Activates the proenkephalin gene independently of promoter binding, probably through protein-protein interaction. When secreted, behaves as an inhibitor of cell proliferation, by arresting cells in the G0 or G1 phase. Regulates epithelial cell proliferation and side-branching in the mammary gland. Required for neural tube closure and skeletal patterning. Controls the expression of peripheral tissue antigens in pancreatic lymph nodes. Transcriptional activator of EIF4G3. May also involved in behavior. The polypeptide is Deformed epidermal autoregulatory factor 1 homolog (Deaf1) (Rattus norvegicus (Rat)).